We begin with the raw amino-acid sequence, 227 residues long: Orotate phosphoribosyltransferase (227 aa).

Residues Lys51, Arg119, Lys120, and Lys123 each contribute to the 5-phospho-alpha-D-ribose 1-diphosphate site. Residues Thr149 and Arg177 each contribute to the orotate site.

This sequence belongs to the purine/pyrimidine phosphoribosyltransferase family. PyrE subfamily. In terms of assembly, homodimer. In terms of tissue distribution, expressed in body wall muscles, spermatheca and vulva muscles.

The enzyme catalyses orotidine 5'-phosphate + diphosphate = orotate + 5-phospho-alpha-D-ribose 1-diphosphate. It carries out the reaction UMP + diphosphate = 5-phospho-alpha-D-ribose 1-diphosphate + uracil. It participates in pyrimidine metabolism; UMP biosynthesis via de novo pathway; UMP from orotate: step 1/2. The protein operates within pyrimidine metabolism; UMP biosynthesis via salvage pathway; UMP from uracil: step 1/1. Its function is as follows. Phosphoribosyltransferase which catalyzes the formation of UMP from uracil in vitro and thus may be involved in UMP biosynthesis via the salvage pathway. May also participate in the first step of UMP synthesis by catalyzing the formation of orotidine 5'-phosphate, a UMP precursor, from orotate. In Caenorhabditis elegans, this protein is Orotate phosphoribosyltransferase.